Reading from the N-terminus, the 486-residue chain is Glutamyl-tRNA(Gln) amidotransferase subunit A (486 aa).

Catalysis depends on charge relay system residues K76 and S151. Residue S175 is the Acyl-ester intermediate of the active site.

This sequence belongs to the amidase family. GatA subfamily. Heterotrimer of A, B and C subunits.

It catalyses the reaction L-glutamyl-tRNA(Gln) + L-glutamine + ATP + H2O = L-glutaminyl-tRNA(Gln) + L-glutamate + ADP + phosphate + H(+). In terms of biological role, allows the formation of correctly charged Gln-tRNA(Gln) through the transamidation of misacylated Glu-tRNA(Gln) in organisms which lack glutaminyl-tRNA synthetase. The reaction takes place in the presence of glutamine and ATP through an activated gamma-phospho-Glu-tRNA(Gln). The polypeptide is Glutamyl-tRNA(Gln) amidotransferase subunit A (Chromohalobacter salexigens (strain ATCC BAA-138 / DSM 3043 / CIP 106854 / NCIMB 13768 / 1H11)).